Consider the following 160-residue polypeptide: Tumor suppressor ARF (160 aa).

The interaction with CDK5RAP3 and MDM2 stretch occupies residues 1-63; the sequence is MGRRFVVTVR…RRGPQPHPGP (63 aa). Disordered stretches follow at residues 49 to 74 and 90 to 116; these read PERI…QSGS and HPLP…GRGA.

In terms of assembly, does not interact with cyclins, CDK1, CDK2, CDK4, CDK5 or CDK6. Binds to BCL6, E2F1, HUWE1, MDM2, MYC, NPM1/B23, TOP1/TOPOI and UBE2I/UBC9. Interacts with TBRG1 and COMMD1. Interacts with CDKN2AIP and E4F1. Interacts with CDK5RAP3 and MDM2; form a ternary complex involved in regulation of p53/TP53. Interacts with NOP53; the interaction is direct and promotes ARF nucleoplasmic relocalization and ubiquitin-mediated proteasomal degradation. Interacts with TTF1 (via the N-terminal region (NRD) and a C-terminal region); the interaction is direct and inhibits the nucleolar localization of TTF1. Ubiquitinated in normal cells by TRIP12 via the ubiquitin fusion degradation (UFD) pathway, a process that mediates ubiquitination at the N-terminus, regardless of the absence of lysine residues. Ubiquitination leads to its proteasomal degradation. In cancer cells, however, TRIP12 is located in a different cell compartment, preventing ubiquitination and degradation. Widely expressed with very low levels in kidney and colon.

The protein localises to the nucleus. It is found in the nucleolus. Its subcellular location is the nucleoplasm. Functionally, capable of inducing cell cycle arrest in G1 and G2 phases. Acts as a tumor suppressor. Binds to MDM2 and blocks its nucleocytoplasmic shuttling by sequestering it in the nucleolus. This inhibits the oncogenic action of MDM2 by blocking MDM2-induced degradation of p53 and enhancing p53-dependent transactivation and apoptosis. Also induces G2 arrest and apoptosis in a p53-independent manner by preventing the activation of cyclin B1/CDC2 complexes. Binds to BCL6 and down-regulates BCL6-induced transcriptional repression. Binds to E2F1 and MYC and blocks their transcriptional activator activity but has no effect on MYC transcriptional repression. Binds to TOP1/TOPOI and stimulates its activity. This complex binds to rRNA gene promoters and may play a role in rRNA transcription and/or maturation. Interacts with NPM1/B23 and promotes its polyubiquitination and degradation, thus inhibiting rRNA processing. Plays a role in inhibiting ribosome biogenesis, perhaps by binding to the nucleolar localization sequence of transcription termination factor TTF1, and thereby preventing nucleolar localization of TTF1. Interacts with COMMD1 and promotes its 'Lys63'-linked polyubiquitination. Interacts with UBE2I/UBC9 and enhances sumoylation of a number of its binding partners including MDM2 and E2F1. Binds to HUWE1 and represses its ubiquitin ligase activity. May play a role in controlling cell proliferation and apoptosis during mammary gland development. This chain is Tumor suppressor ARF, found in Rattus norvegicus (Rat).